The sequence spans 249 residues: Ubiquinone biosynthesis O-methyltransferase (249 aa).

Arginine 41, glycine 72, aspartate 93, and methionine 136 together coordinate S-adenosyl-L-methionine.

It belongs to the methyltransferase superfamily. UbiG/COQ3 family.

It carries out the reaction a 3-demethylubiquinol + S-adenosyl-L-methionine = a ubiquinol + S-adenosyl-L-homocysteine + H(+). It catalyses the reaction a 3-(all-trans-polyprenyl)benzene-1,2-diol + S-adenosyl-L-methionine = a 2-methoxy-6-(all-trans-polyprenyl)phenol + S-adenosyl-L-homocysteine + H(+). Its pathway is cofactor biosynthesis; ubiquinone biosynthesis. O-methyltransferase that catalyzes the 2 O-methylation steps in the ubiquinone biosynthetic pathway. This is Ubiquinone biosynthesis O-methyltransferase from Methylobacterium nodulans (strain LMG 21967 / CNCM I-2342 / ORS 2060).